The chain runs to 315 residues: WD repeat domain-containing protein 83 (315 aa).

WD repeat units follow at residues 23–62 (CQQG…LLKT), 65–104 (GHGY…VTRK), 107–146 (GHAG…MEPI), 151–188 (ESQD…LQVD), 189–228 (YIGS…MLGE), 233–272 (VNKG…LTLK), and 275–313 (VGKA…AAEN).

It belongs to the WD repeat MORG1 family.

The protein localises to the cytoplasm. Its function is as follows. Molecular scaffold protein for various multimeric protein complexes. Acts as a module in the assembly of a multicomponent scaffold for the ERK pathway, linking ERK responses to specific agonists. Also involved in response to hypoxia by acting as a negative regulator of HIF1A/HIF-1-alpha. This chain is WD repeat domain-containing protein 83 (wdr83), found in Danio rerio (Zebrafish).